Consider the following 392-residue polypeptide: Meiotically up-regulated gene 11 protein (392 aa).

It is found in the cytoplasm. Its subcellular location is the nucleus. Functionally, has a role in meiosis. This chain is Meiotically up-regulated gene 11 protein (mug11), found in Schizosaccharomyces pombe (strain 972 / ATCC 24843) (Fission yeast).